Here is a 433-residue protein sequence, read N- to C-terminus: Urokinase-type plasminogen activator (433 aa).

A signal peptide spans Met1–Gly20. One can recognise an EGF-like domain in the interval Gly29–Glu65. 6 cysteine pairs are disulfide-bonded: Cys33/Cys41, Cys35/Cys53, Cys55/Cys64, Cys72/Cys153, Cys93/Cys135, and Cys124/Cys148. The tract at residues Leu36 to Phe59 is binds urokinase plasminogen activator surface receptor. The region spanning Cys72 to Cys153 is the Kringle domain. The connecting peptide stretch occupies residues Ser154–Lys180. Ser160 carries the post-translational modification Phosphoserine. 6 disulfide bridges follow: Cys170–Cys301, Cys211–Cys227, Cys219–Cys290, Cys315–Cys384, Cys347–Cys363, and Cys374–Cys402. The Peptidase S1 domain occupies Ile181–Arg426. Active-site charge relay system residues include His226 and Asp277. Catalysis depends on Ser378, which acts as the Charge relay system.

This sequence belongs to the peptidase S1 family. In terms of assembly, found in high and low molecular mass forms. Each consists of two chains, A and B. The high molecular mass form contains a long chain A which is cleaved to yield a short chain A. Forms heterodimer with SERPINA5. Binds LRP1B; binding is followed by internalization and degradation. Interacts with MRC2. Interacts with PLAUR. In complex with SERPINE1, interacts with PLAUR/uPAR. Interacts with SORL1 and LRP1, either alone or in complex with SERPINE1; these interactions are abolished in the presence of LRPAP1/RAP. The ternary complex composed of PLAUR-PLAU-PAI1 also interacts with SORLA. Produced as an inactive single-chain protein (pro-uPA or sc-uPA), is processed into the active disulfide-linked two-chain form of PLAU/uPA by a proteolytic event mediated, at least, by TMPRSS4.

Its subcellular location is the secreted. The enzyme catalyses Specific cleavage of Arg-|-Val bond in plasminogen to form plasmin.. Its activity is regulated as follows. Inhibited by SERPINA5. Inhibited by SERPINE1. Its function is as follows. Specifically cleaves the zymogen plasminogen to form the active enzyme plasmin. This Bos taurus (Bovine) protein is Urokinase-type plasminogen activator (PLAU).